A 1103-amino-acid chain; its full sequence is PH, RCC1 and FYVE domains-containing protein 1 (1103 aa).

A PH domain is found at 22–123 (KKGTQLLKYG…IWIGGLKTLI (102 aa)). The disordered stretch occupies residues 144 to 233 (DASRELTSSS…SSSHGSAADD (90 aa)). Low complexity-rich tracts occupy residues 151 to 169 (SSSP…SSPG) and 217 to 231 (SVSS…GSAA). 7 RCC1 repeats span residues 237-298 (LGDV…FVTR), 299-351 (QGEI…AVTL), 353-406 (GELY…LITS), 407-458 (YGRL…AVVE), 471-522 (SGKL…GLTT), 524-574 (GQVF…ALTS), and 575-626 (RNEV…AICL). An FYVE-type zinc finger spans residues 632–694 (GAEQSQCSTC…VCDSCYVKLS (63 aa)). The Zn(2+) site is built by Cys638, Cys641, Cys654, Cys657, Cys662, Cys665, Cys686, and Cys689. The segment at 783–818 (ATPKLAQAPSGISSRSVSPFSRRSSPPRSATPMPST) is disordered. Positions 791-818 (PSGISSRSVSPFSRRSSPPRSATPMPST) are enriched in low complexity. A coiled-coil region spans residues 828 to 904 (ADNMKKTNEI…IAQLKDVAEK (77 aa)). Positions 962–979 (NLQSPKQTPRASERNSNA) are enriched in polar residues. Residues 962–988 (NLQSPKQTPRASERNSNAYPADPRLSS) are disordered. The 56-residue stretch at 1023 to 1078 (AEWIEQYEPGVYITLVALHDGTRDLRRVRFSRRRFGEHQAETWWSENREKVYEKYN) folds into the BRX domain. Residues 1079-1103 (VRVSEKSTASQTHRDRDEEEEDIPH) are disordered.

As to expression, mostly expressed in flowers, and, to a lower extent, in stems, leaves, siliques, seeds.

Functionally, binds to phosphatidic acid and to phosphoinositides such as PtdIns3P, PtdIns(3,4)P(2), PtdIns(3,4,5)P(3) and PtdIns(4,5)P(2). Catalyzes guanine nucleotide exchange on specific Rab proteins. The polypeptide is PH, RCC1 and FYVE domains-containing protein 1 (Arabidopsis thaliana (Mouse-ear cress)).